Here is a 401-residue protein sequence, read N- to C-terminus: 8-amino-7-oxononanoate synthase (401 aa).

A substrate-binding site is contributed by R24. Position 111 to 112 (111 to 112 (GF)) interacts with pyridoxal 5'-phosphate. Residue H137 coordinates substrate. The pyridoxal 5'-phosphate site is built by S183, H211, and T240. Position 243 is an N6-(pyridoxal phosphate)lysine (K243). T357 lines the substrate pocket.

The protein belongs to the class-II pyridoxal-phosphate-dependent aminotransferase family. BioF subfamily. Homodimer. Pyridoxal 5'-phosphate is required as a cofactor.

The enzyme catalyses 6-carboxyhexanoyl-[ACP] + L-alanine + H(+) = (8S)-8-amino-7-oxononanoate + holo-[ACP] + CO2. It participates in cofactor biosynthesis; biotin biosynthesis. In terms of biological role, catalyzes the decarboxylative condensation of pimeloyl-[acyl-carrier protein] and L-alanine to produce 8-amino-7-oxononanoate (AON), [acyl-carrier protein], and carbon dioxide. In Xylella fastidiosa (strain 9a5c), this protein is 8-amino-7-oxononanoate synthase.